The chain runs to 441 residues: Deoxyguanosinetriphosphate triphosphohydrolase-like protein (441 aa).

The disordered stretch occupies residues 1 to 27 (MTSSVWQERRHGEDKQRRNDHRSPYQR). The span at 7–27 (QERRHGEDKQRRNDHRSPYQR) shows a compositional bias: basic and acidic residues. Positions 59 to 252 (RLTHSLEVSQ…MELADDIAYA (194 aa)) constitute an HD domain.

This sequence belongs to the dGTPase family. Type 2 subfamily.

The chain is Deoxyguanosinetriphosphate triphosphohydrolase-like protein from Shewanella oneidensis (strain ATCC 700550 / JCM 31522 / CIP 106686 / LMG 19005 / NCIMB 14063 / MR-1).